We begin with the raw amino-acid sequence, 1918 residues long: MEERRPHLDARPRNSHTNHRGPVDGELPPRARNQANNPPANALRGGASHPGRHPRANNHPAAYWQREERFRAMGRNPHQGRRNQEGHASDEARDQRHDQENDTRWRNGNQDCRNRRPPWSNDNFQQWRTPHQKPTEQPQQAKKLGYKFLESLLQKDPSEVVITLATSLGLKELLSHSSMKSNFLELICQVLRKACSSKMDRQSVLHVLGILKNSKFLKVCLPAYVVGMITEPIPDIRNQYPEHISNIISLLQDLVSVFPASSVQETSMLVSLLPTSLNALRASGVDIEEETEKNLEKVQTIIEHLQEKRREGTLRVDTYTLVQPEAEDHVESYRTMPIYPTYNEVHLDERPFLRPNIISGKYDSTAIYLDTHFRLLREDFVRPLREGILELLQSFEDQGLRKRKFDDIRIYFDTRIITPMCSSSGIVYKVQFDTKPLKFVRWQNSKRLLYGSLVCMSKDNFETFLFATVSNREQEDLCRGIVQLCFNEQSQQLLAEVQPSDSFLMVETTAYFEAYRHVLEGLQEVQEEDVPFQRNIVECNSHVKEPRYLLMGGRYDFTPLIENPSATGEFLRNVEGLRHPRINVLDPGQWPSKEALKLDDSQMEALQFALTRELAIIQGPPGTGKTYVGLKIVQALLTNESVWQISLQKFPILVVCYTNHALDQFLEGIYNCQKTSIVRVGGRSNSEILKQFTLRELRNKREFRRNLPMHLRRAYMSIMTQMKESEQELHEGAKTLECTMRGVLREQYLQKYISPQHWESLMNGPVQDSEWICFQHWKHSMMLEWLGLGVGSFTQSVSPAGPENTAQAEGDEEEEGEEESSLIEIAEEADLIQADRVIEEEEVVRPQRRKKEESGADQELAKMLLAMRLDHCGTGTAAGQEQATGEWQTQRNQKKKMKKRVKDELRKLNTMTAAEANEIEDVWQLDLSSRWQLYRLWLQLYQADTRRKILSYERQYRTSAERMAELRLQEDLHILKDAQVVGMTTTGAAKYRQILQKVEPRIVIVEEAAEVLEAHTIATLSKACQHLILIGDHQQLRPSANVYDLAKNFNLEVSLFERLVKVNIPFVRLNYQHRMCPEIARLLTPHIYQDLENHPSVLKYEKIKGVSSNLFFVEHNFPEQEIQEGKSHQNQHEAHFVVELCKYFLCQEYLPSQITILTTYTGQLFCLRKLMPAKTFAGVRVHVVDKYQGEENDIILLSLVRSNQEGKVGFLQISNRICVALSRAKKGMYCIGNMQMLAKVPLWSKIIHTLRENNQIGPMLRLCCQNHPETHTLVSKASDFQKVPEGGCSLPCEFRLGCGHVCTRACHPYDSSHKEFQCMKPCQKVICQEGHRCPLVCFQECQPCQVKVPKTIPRCGHEQMVPCSVPESDFCCQEPCSKSLRCGHRCSHPCGEDCVQLCSEMVTIKLKCGHSQPVKCGHVEGLLYGGLLVKCTTKCGTILDCGHPCPGSCHSCFEGRFHERCQQPCKRLLICSHKCQEPCIGECPPCQRTCQNRCVHSQCKKKCGELCSPCVEPCVWRCQHYQCTKLCSEPCNRPPCYVPCTKLLVCGHPCIGLCGEPCPKKCRICHMDEVTQIFFGFEDEPDARFVQLEDCSHIFEVQALDRYMNEQKDDEVAIRLKVCPICQVPIRKNLRYGTSIKQRLEEIEIIKEKIQGSAGEIATSQERLKALLERKSLLHQLLPEDFLMLKEKLAQKNLSVKDLGLVENYISFYDHLASLWDSLKKMHVLEEKRVRTRLEQVHEWLAKKRLSFTSQELSDLRSEIQRLTYLVNLLTRYKIAEKKVKDSIAVEVYSVQNILEKTCKFTQEDEQLVQEKMEALKATLPCSGLGISEEERVQIVSAIGYPRGHWFKCRNGHIYVIGDCGGAMERGTCPDCKEVIGGTNHTLERSNQLASEMDGAQHAAWSDTANNLMNFEEIQGMM.

Positions M1 to P12 are enriched in basic and acidic residues. 2 disordered regions span residues M1–N58 and R75–Q140. Over residues R30–A42 the composition is skewed to low complexity. A compositionally biased stretch (basic and acidic residues) spans R82–W105. The span at S120 to T129 shows a compositional bias: polar residues. Residues D286–T313 are a coiled coil. Disordered regions lie at residues S796–E819 and T876–K896. Residues E809–E819 show a composition bias toward acidic residues. The span at A877 to W887 shows a compositional bias: polar residues. Residues E886–R967 are a coiled coil. 6 NF-X1-type zinc fingers span residues C1298–K1320, G1330–V1346, C1382–E1400, C1441–Q1463, C1471–R1488, and C1546–I1564. A coiled-coil region spans residues L1741–L1820. An RZ-type zinc finger spans residues I1827 to H1898. Zn(2+)-binding residues include C1849, H1853, C1869, and C1872.

The protein belongs to the ZNFX1 family. As to quaternary structure, interacts with MAVS. In terms of tissue distribution, widely expressed.

Its subcellular location is the mitochondrion outer membrane. It localises to the cytoplasm. The protein resides in the stress granule. Functionally, RNA-binding protein that initiates the antiviral response and is required to restrict the replication of RNA viruses. Acts as a double-stranded RNA (dsRNA) sensor that recognizes viral RNA and then interacts with MAVS to initiate the type I interferon response. Also required for immunity against some bacteria, such as mycobacteria. The polypeptide is NFX1-type zinc finger-containing protein 1 (Homo sapiens (Human)).